The chain runs to 368 residues: Protein mab-21-like (368 aa).

This sequence belongs to the mab-21 family.

This is Protein mab-21-like from Drosophila pseudoobscura pseudoobscura (Fruit fly).